The sequence spans 426 residues: MSLIKDIKARQVIDSRGNPTVEADVILDDGSKGRGISPSGASTGSREAIELRDGDKSKFGGKGVLKAVNNINTEIRDLLIGKEATDQAAIDNAMIALDGTDNKARLGANAILAVSIAVAQAAAQSKGLPLYAYLKTDDYKMPVPMMNIINGGEHADNSVDFQEFMIMPVGAPSMSEAIRYGAEIFHALKKVLHDKGYNTAVGDEGGFAPDLKSNEEAITVILEAIEAAGYKAGEDIMIAMDAASSELYKDGKYFLGSENKTLTSKEMVDLLSDWVTKYPIISIEDGLDESDWDGFKYQTEKDGKRLQIVGDDLFVTNPKILKEGIEKGIANSILIKINQIGTLTETFEAIQMAKDAGYTAVVSHRSGETEDTVIADIAVATGAGQIKTGSLSRTDRIAKYNQLIRIEEELGSKAVYPGKDAFYNLK.

Gln162 lines the (2R)-2-phosphoglycerate pocket. Glu204 (proton donor) is an active-site residue. Residues Asp241, Glu284, and Asp311 each contribute to the Mg(2+) site. Lys336, Arg365, Ser366, and Lys387 together coordinate (2R)-2-phosphoglycerate. Lys336 acts as the Proton acceptor in catalysis.

Belongs to the enolase family. In terms of assembly, component of the RNA degradosome, a multiprotein complex involved in RNA processing and mRNA degradation. Mg(2+) serves as cofactor.

The protein localises to the cytoplasm. Its subcellular location is the secreted. It localises to the cell surface. It catalyses the reaction (2R)-2-phosphoglycerate = phosphoenolpyruvate + H2O. It participates in carbohydrate degradation; glycolysis; pyruvate from D-glyceraldehyde 3-phosphate: step 4/5. Catalyzes the reversible conversion of 2-phosphoglycerate (2-PG) into phosphoenolpyruvate (PEP). It is essential for the degradation of carbohydrates via glycolysis. The protein is Enolase of Hydrogenovibrio crunogenus (strain DSM 25203 / XCL-2) (Thiomicrospira crunogena).